A 181-amino-acid chain; its full sequence is Protein FAM237A (181 aa).

An N-terminal signal peptide occupies residues 1–33; it reads MADPGNRGGIHRPLSFTCSLLIVGMCCVSPFFC. The residue at position 113 (leucine 113) is a Leucine amide. A propeptide spans 114-181 (removed in the mature form); sequence GRRQLVGEEE…GKVNLEIKRK (68 aa).

In terms of processing, the active form requires C-terminal amidation and disulfide bond formation. Expressed in the pituitary, testis, and heart and at lower levels in the brain.

Its subcellular location is the secreted. In terms of biological role, may be capable of activating GPR83 via the GNAQ signaling pathway. This Homo sapiens (Human) protein is Protein FAM237A.